A 105-amino-acid chain; its full sequence is Small ribosomal subunit protein uS10 (105 aa).

This sequence belongs to the universal ribosomal protein uS10 family. In terms of assembly, part of the 30S ribosomal subunit.

Involved in the binding of tRNA to the ribosomes. In Trichodesmium erythraeum (strain IMS101), this protein is Small ribosomal subunit protein uS10.